Here is a 475-residue protein sequence, read N- to C-terminus: B-type cell cycle switch protein ccs52A (475 aa).

The segment at 1 to 29 is disordered; sequence MDGTGNRNPPPTSTVGDNSPPPEPSPESL. A PEST motif motif is present at residues 7-28; the sequence is RNPPPTSTVGDNSPPPEPSPES. Phosphoserine occurs at positions 43 and 45. The short motif at 51–57 is the C-box element; that stretch reads DRFIPSR. The CSM motif motif lies at 80–91; the sequence is AYTTLLRTALFG. Thr-99 carries the post-translational modification Phosphothreonine. Phosphoserine is present on residues Ser-144 and Ser-155. WD repeat units lie at residues 166 to 203, 207 to 246, 249 to 289, 290 to 329, 332 to 374, 376 to 417, and 420 to 459; these read QDDFYLNLVDWSSHNVLAVGLGNCVYLWNACSSKVTKL, GVDDCVCSVGWAQRGTHLAVGTNNGKVQIWDAARCKKIRS, GHRL…SKLS, GHKSEVCGLKWSYDNRELASGGNDNKLFVWNQHSTQPVLK, EHTA…HLSC, DTGS…KLAT, and GHTYRVLYLAISPDGQTIVTGAGDETLRFWNVFPSPKSQN. Ser-454 carries the phosphoserine modification.

It belongs to the WD repeat CDC20/Fizzy family. Mostly expressed in nodules, and, to a lower extent, in root tips, stems, hypocotyls, leaves, flower buds and flowers.

It localises to the nucleus. It participates in protein modification; protein ubiquitination. Functionally, component of the anaphase promoting complex/cyclosome (APC/C), a cell cycle-regulated E3 ubiquitin-protein ligase complex that controls progression through mitosis and the G1 phase of the cell cycle. Required to switch form cell proliferation to cell differentiation, endoreduplication and ploidy-dependent cell enlargement, including during nodulation, before nodule differentiation. Involved in root-knot nematode Meloidogyne incognita giant cells formation. This is B-type cell cycle switch protein ccs52A from Medicago truncatula (Barrel medic).